A 163-amino-acid chain; its full sequence is Probable phosphotransferase enzyme IIB component M6_Spy0801 (163 aa).

The region spanning 1 to 163 is the PTS EIIB type-4 domain; the sequence is MITQIRVDDR…TKVHLSQLVN (163 aa). The active-site Pros-phosphohistidine intermediate is His-13.

It localises to the cytoplasm. Its function is as follows. The phosphoenolpyruvate-dependent sugar phosphotransferase system (sugar PTS), a major carbohydrate active -transport system, catalyzes the phosphorylation of incoming sugar substrates concomitantly with their translocation across the cell membrane. This is Probable phosphotransferase enzyme IIB component M6_Spy0801 from Streptococcus pyogenes serotype M6 (strain ATCC BAA-946 / MGAS10394).